Here is a 186-residue protein sequence, read N- to C-terminus: Lipid A palmitoyltransferase PagP (186 aa).

Positions 1–25 are cleaved as a signal peptide; that stretch reads MNVSKYVAIFSFVFIQLISVGKVFA. Catalysis depends on residues His-58, Asp-101, and Ser-102.

Belongs to the lipid A palmitoyltransferase family. Homodimer.

The protein localises to the cell outer membrane. It carries out the reaction lipid A (E. coli) + a 1-hexadecanoyl-2-acyl-sn-glycero-3-phosphocholine = hepta-acyl lipid A (E. coli) + a 2-acyl-sn-glycero-3-phosphocholine. The catalysed reaction is lipid IIA + a 1-hexadecanoyl-2-acyl-sn-glycero-3-phosphocholine = lipid IIB + a 2-acyl-sn-glycero-3-phosphocholine. It catalyses the reaction lipid IVA (E. coli) + a 1-hexadecanoyl-2-acyl-sn-glycero-3-phosphocholine = lipid IVB (E. coli) + a 2-acyl-sn-glycero-3-phosphocholine. With respect to regulation, inhibited by lauryldimethylamine oxide (LDAO) and dodecylphosphocholine (DPC). Functionally, transfers a palmitate residue from the sn-1 position of a phospholipid to the N-linked hydroxymyristate on the proximal unit of lipid A or its precursors. Phosphatidylglycerol (PtdGro), phosphatidylethanolamine (PtdEtn), phosphatidylserine (PtdSer) and phosphatidic acid (Ptd-OH) are all effective acyl donors. The sequence is that of Lipid A palmitoyltransferase PagP from Escherichia coli (strain K12).